A 686-amino-acid chain; its full sequence is MSKIRVHEYAKKHNISSKDLMTKLKEMNIEVSNHMTMLDDEVVNKLDNEYQAEKPSVADEFEVEEKVVRSKKNSNKKKKKGKGNEDKRQENFAGRQQTQTVETPDKITFSGSLTVGDLAKKLSKEPSEIIKKLFMLGIMATINQDLDKDTIELIANDYGIEVEEEVIVSETEFETFIDEQDDEENLKERPAVVTIMGHVDHGKTTLLDSIRNSKVTAGEAGGITQHIGAYQVEVNDKKITFLDTPGHAAFTTMRARGAQVTDITILVVAADDGVMPQTVEAINHAKAAGVPIIVAVNKMDKPAANPDRVMQELTEYELVPEAWGGDTIFVPISAIQGEGIDNLLEMILLVSEVEEYKANPNRYATGTVIEAQLDKGKGTIATLLVQNGTLRVGDPIVVGTTFGRVRAMVSDIGRRVKVAGPSTPVEITGLNEVPQAGDRFMAFADEKKARQIGESRAQEALLAQRGEKSKLSLEDLFQQIQEGDVKEINLIVKADVQGSVEAMAASLRKIDVEGVKVKIIHTGVGAITESDIILASASNAIVIGFNVRPDVNAKRTAELENVDIRLHRIIYKVIEEIEAAMQGMLDPEFEEKVIGQAEVRQTFKVTKVGTIAGCYVTDGKITRDSGVRIIRDGVVIYEGQLDTLKRFKDDVKEVAQNYECGITIEKYNDLKEGDIIEAYIMEEVKR.

A disordered region spans residues 54 to 105; sequence KPSVADEFEVEEKVVRSKKNSNKKKKKGKGNEDKRQENFAGRQQTQTVETPD. Residues 69 to 81 are compositionally biased toward basic residues; sequence RSKKNSNKKKKKG. A tr-type G domain is found at 188 to 357; it reads ERPAVVTIMG…LLVSEVEEYK (170 aa). The interval 197–204 is G1; the sequence is GHVDHGKT. Position 197-204 (197-204) interacts with GTP; that stretch reads GHVDHGKT. The segment at 222 to 226 is G2; it reads GITQH. A G3 region spans residues 243–246; the sequence is DTPG. Residues 243–247 and 297–300 each bind GTP; these read DTPGH and NKMD. Residues 297 to 300 are G4; it reads NKMD. Residues 333 to 335 form a G5 region; it reads SAI.

The protein belongs to the TRAFAC class translation factor GTPase superfamily. Classic translation factor GTPase family. IF-2 subfamily.

It is found in the cytoplasm. Its function is as follows. One of the essential components for the initiation of protein synthesis. Protects formylmethionyl-tRNA from spontaneous hydrolysis and promotes its binding to the 30S ribosomal subunits. Also involved in the hydrolysis of GTP during the formation of the 70S ribosomal complex. The protein is Translation initiation factor IF-2 of Bacillus cereus (strain AH187).